The primary structure comprises 404 residues: Putative glutamate--cysteine ligase 2 (404 aa).

Residues 377-404 form a disordered region; that stretch reads GPAGKRAHEGGRSFRPAAGAPMSIRGQE.

This sequence belongs to the glutamate--cysteine ligase type 2 family. YbdK subfamily.

It catalyses the reaction L-cysteine + L-glutamate + ATP = gamma-L-glutamyl-L-cysteine + ADP + phosphate + H(+). Functionally, ATP-dependent carboxylate-amine ligase which exhibits weak glutamate--cysteine ligase activity. This is Putative glutamate--cysteine ligase 2 from Pseudomonas aeruginosa (strain UCBPP-PA14).